A 138-amino-acid chain; its full sequence is Large ribosomal subunit protein uL16 (138 aa).

A compositionally biased stretch (basic residues) spans 1–13; the sequence is MLQPSRRKYRKEQ. The tract at residues 1–22 is disordered; that stretch reads MLQPSRRKYRKEQKGRNTGLAT.

It belongs to the universal ribosomal protein uL16 family. As to quaternary structure, part of the 50S ribosomal subunit.

In terms of biological role, binds 23S rRNA and is also seen to make contacts with the A and possibly P site tRNAs. This Bordetella petrii (strain ATCC BAA-461 / DSM 12804 / CCUG 43448) protein is Large ribosomal subunit protein uL16.